A 389-amino-acid chain; its full sequence is NADH-quinone oxidoreductase subunit D (389 aa).

Belongs to the complex I 49 kDa subunit family. As to quaternary structure, NDH-1 is composed of 14 different subunits. Subunits NuoB, C, D, E, F, and G constitute the peripheral sector of the complex.

Its subcellular location is the cell inner membrane. The enzyme catalyses a quinone + NADH + 5 H(+)(in) = a quinol + NAD(+) + 4 H(+)(out). In terms of biological role, NDH-1 shuttles electrons from NADH, via FMN and iron-sulfur (Fe-S) centers, to quinones in the respiratory chain. The immediate electron acceptor for the enzyme in this species is believed to be ubiquinone. Couples the redox reaction to proton translocation (for every two electrons transferred, four hydrogen ions are translocated across the cytoplasmic membrane), and thus conserves the redox energy in a proton gradient. The polypeptide is NADH-quinone oxidoreductase subunit D (Rickettsia prowazekii (strain Madrid E)).